We begin with the raw amino-acid sequence, 168 residues long: SsrA-binding protein (168 aa).

Residues 1 to 20 (MAAQSKQAKPSGKQGGKKII) form a disordered region.

The protein belongs to the SmpB family.

The protein localises to the cytoplasm. Functionally, required for rescue of stalled ribosomes mediated by trans-translation. Binds to transfer-messenger RNA (tmRNA), required for stable association of tmRNA with ribosomes. tmRNA and SmpB together mimic tRNA shape, replacing the anticodon stem-loop with SmpB. tmRNA is encoded by the ssrA gene; the 2 termini fold to resemble tRNA(Ala) and it encodes a 'tag peptide', a short internal open reading frame. During trans-translation Ala-aminoacylated tmRNA acts like a tRNA, entering the A-site of stalled ribosomes, displacing the stalled mRNA. The ribosome then switches to translate the ORF on the tmRNA; the nascent peptide is terminated with the 'tag peptide' encoded by the tmRNA and targeted for degradation. The ribosome is freed to recommence translation, which seems to be the essential function of trans-translation. The protein is SsrA-binding protein of Mycobacterium ulcerans (strain Agy99).